Here is a 116-residue protein sequence, read N- to C-terminus: Putative pterin-4-alpha-carbinolamine dehydratase 1 (116 aa).

It belongs to the pterin-4-alpha-carbinolamine dehydratase family.

The enzyme catalyses (4aS,6R)-4a-hydroxy-L-erythro-5,6,7,8-tetrahydrobiopterin = (6R)-L-erythro-6,7-dihydrobiopterin + H2O. This chain is Putative pterin-4-alpha-carbinolamine dehydratase 1, found in Gloeobacter violaceus (strain ATCC 29082 / PCC 7421).